We begin with the raw amino-acid sequence, 325 residues long: Brain mitochondrial carrier protein 1 (325 aa).

Helical transmembrane passes span 38–54 (GLNW…SIVA), 112–128 (LRQA…YQSL), 141–161 (LLIN…IANP), 199–215 (GVVP…GVEL), 240–256 (VSSF…SNPV), and 298–315 (GFWP…IFFI). Solcar repeat units follow at residues 42–131 (KPFV…LKRL), 139–224 (ETLL…TKKH), and 233–323 (DTIL…LKRL).

The protein belongs to the mitochondrial carrier (TC 2.A.29) family. As to quaternary structure, homotetramer. Mainly expressed in brain. Some expression in testis and pituitary.

The protein resides in the mitochondrion inner membrane. The catalysed reaction is sulfite(in) + sulfate(out) = sulfite(out) + sulfate(in). It catalyses the reaction thiosulfate(in) + sulfate(out) = thiosulfate(out) + sulfate(in). The enzyme catalyses sulfate(out) + phosphate(in) = sulfate(in) + phosphate(out). It carries out the reaction oxalate(in) + sulfate(out) = oxalate(out) + sulfate(in). The catalysed reaction is malonate(in) + sulfate(out) = malonate(out) + sulfate(in). It catalyses the reaction maleate(in) + sulfate(out) = maleate(out) + sulfate(in). The enzyme catalyses (S)-malate(in) + sulfate(out) = (S)-malate(out) + sulfate(in). It carries out the reaction (3S)-citramalate(in) + sulfate(out) = (3S)-citramalate(out) + sulfate(in). The catalysed reaction is (3R)-citramalate(in) + sulfate(out) = (3R)-citramalate(out) + sulfate(in). It catalyses the reaction sulfate(out) + succinate(in) = sulfate(in) + succinate(out). The enzyme catalyses (S,S)-tartrate(in) + sulfate(out) = (S,S)-tartrate(out) + sulfate(in). It carries out the reaction (2R,3R)-tartrate(in) + sulfate(out) = (2R,3R)-tartrate(out) + sulfate(in). The catalysed reaction is D-aspartate(in) + sulfate(out) = D-aspartate(out) + sulfate(in). It catalyses the reaction L-aspartate(in) + sulfate(out) = L-aspartate(out) + sulfate(in). The enzyme catalyses sulfate(in) = sulfate(out). It carries out the reaction phosphate(in) = phosphate(out). The catalysed reaction is (S)-malate(out) = (S)-malate(in). It catalyses the reaction citrate(in) = citrate(out). The enzyme catalyses L-aspartate(out) = L-aspartate(in). It carries out the reaction L-glutamate(out) = L-glutamate(in). The catalysed reaction is H(+)(in) = H(+)(out). It catalyses the reaction chloride(in) = chloride(out). With respect to regulation, increased activity at pH lower than 8.0. sulfate/sulfate exchange activity is inhibited strongly by pyridoxal 5'-phosphate, bathophenanthroline and the organic mercurials mersalyl, p-chloromercuribenzoate and HgCl2. Proton conductance is activated by cardiolipin and long-chain free fatty acids and inhibited by purine nucleotides ATP and ADP. Chloride ion transporter activity is inhibited by long-chain free fatty acids. Its function is as follows. Transports inorganic anions (sulfate, sulfite, thiosulfate and phosphate) and, to a lesser extent, a variety of dicarboxylates (e.g. malonate, malate and citramalate) and, even more so, aspartate and glutamate and tricarboxylates. May catalyze the export of sulfite and thiosulfate (the hydrogen sulfide degradation products) from the mitochondria, thereby modulating the level of the hydrogen sulfide. Also can mediate a very low unidirectional transport of anions including sulfate, phosphate, (S)-malate, citrate, L-aspartate and L-glutamate. Maintains oxidative balance (through uncoupling activities) and ATP production (by modifying mitochondrial membrane potential). Is able to transport protons across lipid membranes. Also exhibits transmembrane chloride transport activity to a lesser extent. May modify mitochondrial respiratory efficiency and mitochondrial oxidant production. This chain is Brain mitochondrial carrier protein 1, found in Homo sapiens (Human).